We begin with the raw amino-acid sequence, 504 residues long: Plasma protease C1 inhibitor (504 aa).

Residues 1 to 22 (MASKLTPLTLLLLLLAGDRAFS) form the signal peptide. The tract at residues 23-75 (DSEVTSHSSQDPLVVQEGSRDSVPERDGSRSPIEHTGQSSTWPTTSGSTKISN) is disordered. A compositionally biased stretch (polar residues) spans 24–33 (SEVTSHSSQD). Residues 40 to 55 (GSRDSVPERDGSRSPI) are compositionally biased toward basic and acidic residues. Residues 58-75 (TGQSSTWPTTSGSTKISN) are compositionally biased toward polar residues. Residues N75, N83, N107, N243, and N356 are each glycosylated (N-linked (GlcNAc...) asparagine). Positions 94-132 (AQLPEDSPSQSPVNSSSPPSTASAPPTQAPTEPLCPEPL) are disordered. Over residues 100 to 125 (SPSQSPVNSSSPPSTASAPPTQAPTE) the composition is skewed to low complexity.

It belongs to the serpin family. Interacts with MASP1.

It is found in the secreted. In terms of biological role, serine protease inhibitor, which acrs as a regulator of the classical complement pathway. Forms a proteolytically inactive stoichiometric complex with the C1r or C1s proteases. May also regulate blood coagulation, fibrinolysis and the generation of kinins. Very efficient inhibitor of FXIIa. Inhibits chymotrypsin and kallikrein. The protein is Plasma protease C1 inhibitor (Serping1) of Rattus norvegicus (Rat).